We begin with the raw amino-acid sequence, 1252 residues long: HEAT repeat-containing protein 6 (1252 aa).

One copy of the HEAT 1 repeat lies at P230–G269. The segment at D365–G417 is disordered. Basic residues predominate over residues A384–K396. Phosphoserine is present on residues S471 and S474. 3 HEAT repeats span residues E524–Q562, S586–Y624, and S630–P667. A Phosphothreonine modification is found at T689. Position 714 is a phosphoserine (S714).

This chain is HEAT repeat-containing protein 6 (Heatr6), found in Rattus norvegicus (Rat).